Consider the following 163-residue polypeptide: UPF0587 protein CG4646 (163 aa).

C33, C36, C68, and C71 together coordinate Zn(2+).

It belongs to the UPF0587 family.

This is UPF0587 protein CG4646 from Drosophila melanogaster (Fruit fly).